A 90-amino-acid chain; its full sequence is Probable Fe(2+)-trafficking protein (90 aa).

This sequence belongs to the Fe(2+)-trafficking protein family.

Its function is as follows. Could be a mediator in iron transactions between iron acquisition and iron-requiring processes, such as synthesis and/or repair of Fe-S clusters in biosynthetic enzymes. The protein is Probable Fe(2+)-trafficking protein of Pseudomonas putida (strain W619).